Consider the following 188-residue polypeptide: Elongation factor P (188 aa).

An N6-(3,6-diaminohexanoyl)-5-hydroxylysine modification is found at Lys34.

Belongs to the elongation factor P family. Post-translationally, may be beta-lysylated on the epsilon-amino group of Lys-34 by the combined action of EpmA and EpmB, and then hydroxylated on the C5 position of the same residue by EpmC (if this protein is present). Lysylation is critical for the stimulatory effect of EF-P on peptide-bond formation. The lysylation moiety may extend toward the peptidyltransferase center and stabilize the terminal 3-CCA end of the tRNA. Hydroxylation of the C5 position on Lys-34 may allow additional potential stabilizing hydrogen-bond interactions with the P-tRNA.

It localises to the cytoplasm. It participates in protein biosynthesis; polypeptide chain elongation. Its function is as follows. Involved in peptide bond synthesis. Alleviates ribosome stalling that occurs when 3 or more consecutive Pro residues or the sequence PPG is present in a protein, possibly by augmenting the peptidyl transferase activity of the ribosome. Modification of Lys-34 is required for alleviation. In Glaesserella parasuis serovar 5 (strain SH0165) (Haemophilus parasuis), this protein is Elongation factor P.